The primary structure comprises 235 residues: Protein RESISTANCE TO PHYTOPHTHORA 1, chloroplastic (235 aa).

Residues 1 to 43 (MNSATTMSASVLNYQILKFFPPQKNGFLKSPLIRGKICRFCVS) constitute a chloroplast transit peptide. The span at 53 to 66 (VIEDPKEETQEKSD) shows a compositional bias: basic and acidic residues. The interval 53 to 92 (VIEDPKEETQEKSDGVIVNSTEEEEERSGENSTSTGPSTV) is disordered. 4 helical membrane-spanning segments follow: residues 131–151 (FEVQ…NLIF), 158–178 (IWRL…LRAR), 188–208 (LNYL…FLKS), and 211–231 (VVWS…LGWL).

It is found in the plastid. It localises to the chloroplast. Its subcellular location is the membrane. Plays a positive role in the immune response to the oomycetes P.infestans, including induced oxidative burst and enhanced expression of defense-related genes. The polypeptide is Protein RESISTANCE TO PHYTOPHTHORA 1, chloroplastic (Solanum tuberosum (Potato)).